The sequence spans 327 residues: MSSNDSNDTDKQHTRLDPTGVDDAYIPPEQPETKHHRFKISRDTLRNHFIAAVGEFCGTFMFLWCAYVICNVANHDVALVAAPDGSHPGQLIMIAIGFGFSVMFSIWCFAGVSGGALNPAVSLSLCLARAVSPTRCVVMWVSQIVAGMAAGGAASAMTPGEVLFANSLGLGCSRTRGLFLEMFGTAILCLTVLMTAVEKRETNFMAALPIGISLFIAHVALTAYTGTGVNPARSLGAAVAARYFPHYHWIYWIGPLLGSILAWSVWQLLQILDYTTYVTAEKAASTKEKAQKKVKPAVPLLWLKSNFPLLFFISRSLALNVIIFGKN.

Residues 1-34 (MSSNDSNDTDKQHTRLDPTGVDDAYIPPEQPETK) form a disordered region. At 1–48 (MSSNDSNDTDKQHTRLDPTGVDDAYIPPEQPETKHHRFKISRDTLRNH) the chain is on the cytoplasmic side. The chain crosses the membrane as a helical span at residues 49-69 (FIAAVGEFCGTFMFLWCAYVI). Over 70–91 (CNVANHDVALVAAPDGSHPGQL) the chain is Extracellular. A helical membrane pass occupies residues 92-112 (IMIAIGFGFSVMFSIWCFAGV). Topologically, residues 113 to 136 (SGGALNPAVSLSLCLARAVSPTRC) are cytoplasmic. An NPA 1 motif is present at residues 118–120 (NPA). Residues 137–157 (VVMWVSQIVAGMAAGGAASAM) traverse the membrane as a helical segment. Residues 158 to 176 (TPGEVLFANSLGLGCSRTR) are Extracellular-facing. A helical membrane pass occupies residues 177–197 (GLFLEMFGTAILCLTVLMTAV). Residues 198–203 (EKRETN) are Cytoplasmic-facing. Residues 204-224 (FMAALPIGISLFIAHVALTAY) form a helical membrane-spanning segment. Residues 225-248 (TGTGVNPARSLGAAVAARYFPHYH) are Extracellular-facing. The NPA 2 motif lies at 230-232 (NPA). Residues 249–269 (WIYWIGPLLGSILAWSVWQLL) traverse the membrane as a helical segment. Residues 270–327 (QILDYTTYVTAEKAASTKEKAQKKVKPAVPLLWLKSNFPLLFFISRSLALNVIIFGKN) are Cytoplasmic-facing.

This sequence belongs to the MIP/aquaporin (TC 1.A.8) family.

It localises to the endoplasmic reticulum membrane. It is found in the cell membrane. In terms of biological role, water channel required to facilitate the transport of water across membranes. Involved in sporulation, freeze tolerance and osmotolerance. Is non-functional in most laboratory strains. The chain is Aquaporin-1 (AQY1) from Saccharomyces cerevisiae (Baker's yeast).